Consider the following 237-residue polypeptide: Zinc finger protein 22 (237 aa).

The disordered stretch occupies residues 1 to 33 (MRLGKPKGGISRSASQGKTYESKRKTARQRQKW). An N6-acetyllysine mark is found at Lys18 and Lys23. C2H2-type zinc fingers lie at residues 55-82 (YKCT…GKKS), 83-110 (HKCA…GEKP), 111-138 (YKCD…GEKP), 139-166 (YCCD…GEKP), and 167-194 (YQCE…EKKS). The span at 188–217 (VHKEKKSHKRGKNARAKTHPVSWKRGKGRK) shows a compositional bias: basic residues. Residues 188 to 218 (VHKEKKSHKRGKNARAKTHPVSWKRGKGRKA) are disordered.

It belongs to the krueppel C2H2-type zinc-finger protein family. Highly expressed in the ameloblast layer of mandibular incisors, moderately expressed in submandibular gland, calvaria, kidney and lung, and expressed at low levels in brain and thymus.

The protein localises to the nucleus. In terms of biological role, binds DNA through the consensus sequence 5'-CAATG-3'. May be involved in transcriptional regulation and may play a role in tooth formation. The polypeptide is Zinc finger protein 22 (Znf22) (Rattus norvegicus (Rat)).